A 508-amino-acid chain; its full sequence is Photosystem II CP47 reaction center protein (508 aa).

6 helical membrane passes run 21 to 36 (AVHIMHTALVAGWAGS), 101 to 115 (IVFSGLCFLAAIWHW), 140 to 156 (GIHLFLAGVACFGFGAF), 203 to 218 (IAAGTLGILAGLFHLS), 237 to 252 (VLSSSIAAVFFAAFVV), and 457 to 472 (SFALLFFFGHIWHGAR).

Belongs to the PsbB/PsbC family. PsbB subfamily. PSII is composed of 1 copy each of membrane proteins PsbA, PsbB, PsbC, PsbD, PsbE, PsbF, PsbH, PsbI, PsbJ, PsbK, PsbL, PsbM, PsbT, PsbX, PsbY, PsbZ, Psb30/Ycf12, at least 3 peripheral proteins of the oxygen-evolving complex and a large number of cofactors. It forms dimeric complexes. Requires Binds multiple chlorophylls. PSII binds additional chlorophylls, carotenoids and specific lipids. as cofactor.

The protein resides in the plastid. It is found in the chloroplast thylakoid membrane. In terms of biological role, one of the components of the core complex of photosystem II (PSII). It binds chlorophyll and helps catalyze the primary light-induced photochemical processes of PSII. PSII is a light-driven water:plastoquinone oxidoreductase, using light energy to abstract electrons from H(2)O, generating O(2) and a proton gradient subsequently used for ATP formation. The sequence is that of Photosystem II CP47 reaction center protein from Trachelium caeruleum (Blue throatwort).